The chain runs to 24 residues: Humanin-like 13 (24 aa).

The protein belongs to the humanin family.

Its subcellular location is the secreted. The protein localises to the cytoplasm. Functionally, plays a role as a neuroprotective and antiapoptotic factor. The protein is Humanin-like 13 of Homo sapiens (Human).